The following is a 209-amino-acid chain: Redox-sensing transcriptional repressor Rex (209 aa).

A DNA-binding region (H-T-H motif) is located at residues valine 16–phenylalanine 55. NAD(+) is bound at residue glycine 90–glycine 95.

It belongs to the transcriptional regulatory Rex family. Homodimer.

Its subcellular location is the cytoplasm. Its function is as follows. Modulates transcription in response to changes in cellular NADH/NAD(+) redox state. The sequence is that of Redox-sensing transcriptional repressor Rex from Maridesulfovibrio salexigens (strain ATCC 14822 / DSM 2638 / NCIMB 8403 / VKM B-1763) (Desulfovibrio salexigens).